A 365-amino-acid polypeptide reads, in one-letter code: tRNA(Met) cytidine acetate ligase (365 aa).

ATP is bound by residues 7–20 (IAEFNPFHNGHKYL), G96, N152, and R175.

Belongs to the TmcAL family.

The protein resides in the cytoplasm. It carries out the reaction cytidine(34) in elongator tRNA(Met) + acetate + ATP = N(4)-acetylcytidine(34) in elongator tRNA(Met) + AMP + diphosphate. Functionally, catalyzes the formation of N(4)-acetylcytidine (ac(4)C) at the wobble position of elongator tRNA(Met), using acetate and ATP as substrates. First activates an acetate ion to form acetyladenylate (Ac-AMP) and then transfers the acetyl group to tRNA to form ac(4)C34. The chain is tRNA(Met) cytidine acetate ligase from Streptococcus pneumoniae (strain Taiwan19F-14).